The chain runs to 59 residues: Cytochrome c oxidase subunit 7 (59 aa).

Residues 1–24 (MKNTIVQQQRFLQSIHKPTYLQRP) lie on the Mitochondrial matrix side of the membrane. The helical transmembrane segment at 25 to 47 (GSFALVYPYYAVMAGLGLYSLYA) threads the bilayer. The Mitochondrial intermembrane segment spans residues 48–59 (SGRVIFGKKDAF).

It belongs to the cytochrome c oxidase subunit 7 family. Component of the cytochrome c oxidase (complex IV, CIV), a multisubunit enzyme composed of a catalytic core of 3 subunits and several supernumerary subunits. The complex exists as a monomer or a dimer and forms supercomplexes (SCs) in the inner mitochondrial membrane with ubiquinol-cytochrome c oxidoreductase (cytochrome b-c1 complex, complex III, CIII).

Its subcellular location is the mitochondrion inner membrane. The protein operates within energy metabolism; oxidative phosphorylation. Its function is as follows. Component of the cytochrome c oxidase, the last enzyme in the mitochondrial electron transport chain which drives oxidative phosphorylation. The respiratory chain contains 3 multisubunit complexes succinate dehydrogenase (complex II, CII), ubiquinol-cytochrome c oxidoreductase (cytochrome b-c1 complex, complex III, CIII) and cytochrome c oxidase (complex IV, CIV), that cooperate to transfer electrons derived from NADH and succinate to molecular oxygen, creating an electrochemical gradient over the inner membrane that drives transmembrane transport and the ATP synthase. Cytochrome c oxidase is the component of the respiratory chain that catalyzes the reduction of oxygen to water. Electrons originating from reduced cytochrome c in the intermembrane space (IMS) are transferred via the dinuclear copper A center (CU(A)) of subunit 2 and heme A of subunit 1 to the active site in subunit 1, a binuclear center (BNC) formed by heme A3 and copper B (CU(B)). The BNC reduces molecular oxygen to 2 water molecules using 4 electrons from cytochrome c in the IMS and 4 protons from the mitochondrial matrix. This Schizosaccharomyces pombe (strain 972 / ATCC 24843) (Fission yeast) protein is Cytochrome c oxidase subunit 7 (cox7).